The primary structure comprises 79 residues: Calcium/calmodulin-dependent protein kinase II inhibitor 2 (79 aa).

Positions K43–K69 are inhibitory domain.

The protein belongs to the CAMK2N family.

The protein localises to the nucleus. It is found in the cytoplasm. It localises to the cytosol. Potent and specific cellular inhibitor of CaM-kinase II (CAMK2). Traps Ca(2+)/calmodulin on CAMK2. The protein is Calcium/calmodulin-dependent protein kinase II inhibitor 2 (camk2n2) of Xenopus laevis (African clawed frog).